Reading from the N-terminus, the 588-residue chain is Polyphenol oxidase II, chloroplastic (588 aa).

Polar residues predominate over residues 1-10 (MASFTTSPCT). The tract at residues 1 to 32 (MASFTTSPCTSAAPKTPKSLSSSATISSPLPK) is disordered. The transit peptide at 1–50 (MASFTTSPCTSAAPKTPKSLSSSATISSPLPKPSQIHIATAKRTHHFKVS) directs the protein to the chloroplast. Residues 16–29 (TPKSLSSSATISSP) show a composition bias toward low complexity. Residues 51–88 (CNAPNGDSQPKLDRRDVLLGLGGLAGAASLINNPLAFA) constitute a thylakoid transit peptide. 2 cysteine pairs are disulfide-bonded: Cys99–Cys116 and Cys115–Cys179. Positions 178, 199, 208, 330, 334, and 366 each coordinate Cu cation. The 2'-(S-cysteinyl)-histidine (Cys-His) cross-link spans 182–199 (CNGGYVQTDYPDKEIQVH).

Belongs to the tyrosinase family. In terms of assembly, monomer. Requires Cu(2+) as cofactor.

It is found in the plastid. Its subcellular location is the chloroplast thylakoid lumen. It catalyses the reaction 2 catechol + O2 = 2 1,2-benzoquinone + 2 H2O. Its function is as follows. Catalyzes the oxidation of mono- and o-diphenols to o-diquinones. This chain is Polyphenol oxidase II, chloroplastic (co-2), found in Ipomoea batatas (Sweet potato).